The following is a 609-amino-acid chain: MSCFYLDLLKIKDPSFMKQLDIQELEALAADIRAFLITSTSKSGGHIGPNLGVVELTIALHYSFNSPKDKFIWDVGHQSYVHKILTGRASQFGTLREHGGLDGFPKRKESIHDVFETGHSSTSLSAAAGMVIARDIKKEEFYVIPIIGDGALTGGMALEALNHIGDMGKDMIVILNDNDMSIAPNVGAIHNILGKLRTSDTFKQTKAKVDGTFFEELGFMYLGPINGHDIEEVITNLELAKRTKGPVLLHIVTKKGKGYQPAELDSRGTWHGTGPYKVETGSFIKPAKRAASWSSVISNELIRLAEKDERIVAITPAMPVGSKLEKFAKAFPERFFDVGIAEQHATTMAAGLATQGMKPFLTIYSTFLQRAYDQLVHDVCRQKLNVVIGIDRAGLVGADGETHQGIFDISFLNSIPNMTISMPKDEVEARQLMDTAFSYNDGPFAIRYPRGEAPGAQVAESNTLIPIGKWETIIQPIDAVILTFGPTIRLALKAAEQLELEGYHVGVINARYIKPLDEALLHQILKQKIPILTVEESLLKGGFGASVLEFIEASNYSDVVMHRIGLPDEFISHGSVSIILESFGISTTGIVLKIKEMLAQSGKLRAKRL.

Thiamine diphosphate-binding positions include His77 and 118 to 120 (GHS). Asp149 serves as a coordination point for Mg(2+). Residues 150 to 151 (GA), Asn178, Tyr259, and Glu342 contribute to the thiamine diphosphate site. Asn178 contributes to the Mg(2+) binding site.

It belongs to the transketolase family. DXPS subfamily. Homodimer. The cofactor is Mg(2+). Thiamine diphosphate serves as cofactor.

It catalyses the reaction D-glyceraldehyde 3-phosphate + pyruvate + H(+) = 1-deoxy-D-xylulose 5-phosphate + CO2. It participates in metabolic intermediate biosynthesis; 1-deoxy-D-xylulose 5-phosphate biosynthesis; 1-deoxy-D-xylulose 5-phosphate from D-glyceraldehyde 3-phosphate and pyruvate: step 1/1. Its function is as follows. Catalyzes the acyloin condensation reaction between C atoms 2 and 3 of pyruvate and glyceraldehyde 3-phosphate to yield 1-deoxy-D-xylulose-5-phosphate (DXP). The sequence is that of 1-deoxy-D-xylulose-5-phosphate synthase from Listeria monocytogenes serotype 4b (strain CLIP80459).